The sequence spans 520 residues: Beta-glucosidase 45 (520 aa).

The N-terminal stretch at Met1–Gly22 is a signal peptide. N-linked (GlcNAc...) asparagine glycosylation occurs at Asn3. A beta-D-glucoside contacts are provided by residues Gln52, His155, and Asn200–Glu201. Glu201 (proton donor) is an active-site residue. Residues Cys220 and Cys227 are joined by a disulfide bond. A glycan (N-linked (GlcNAc...) asparagine) is linked at Asn226. Tyr344 contributes to the a beta-D-glucoside binding site. Cys352 and Cys357 form a disulfide bridge. Asn378 carries an N-linked (GlcNAc...) asparagine glycan. Residue Glu417 coordinates a beta-D-glucoside. Glu417 (nucleophile) is an active-site residue. N-linked (GlcNAc...) asparagine glycosylation occurs at Asn435. A beta-D-glucoside is bound by residues Trp466, Glu473–Trp474, and Phe482.

This sequence belongs to the glycosyl hydrolase 1 family. In terms of tissue distribution, expressed in stems and siliques.

It carries out the reaction Hydrolysis of terminal, non-reducing beta-D-glucosyl residues with release of beta-D-glucose.. Hydrolyzes p-nitrophenyl beta-D-glucoside and natural glucosides such as syringin, coniferin and p-coumaryl alcohol glucoside. May be involved in lignification by hydrolyzing monolignol glucosides. This chain is Beta-glucosidase 45, found in Arabidopsis thaliana (Mouse-ear cress).